The following is a 313-amino-acid chain: Malate dehydrogenase (313 aa).

Residues 8–13 (GAGNVG) and D33 each bind NAD(+). Substrate contacts are provided by R83 and R89. Residues N96 and 119 to 121 (ISN) contribute to the NAD(+) site. Residues N121 and R152 each coordinate substrate. H176 functions as the Proton acceptor in the catalytic mechanism.

This sequence belongs to the LDH/MDH superfamily. MDH type 3 family.

It catalyses the reaction (S)-malate + NAD(+) = oxaloacetate + NADH + H(+). Catalyzes the reversible oxidation of malate to oxaloacetate. This is Malate dehydrogenase from Bacteroides thetaiotaomicron (strain ATCC 29148 / DSM 2079 / JCM 5827 / CCUG 10774 / NCTC 10582 / VPI-5482 / E50).